The primary structure comprises 355 residues: Septin-2B (355 aa).

One can recognise a Septin-type G domain in the interval 33–305 (KGFEFTLMVV…ENFRSERLKK (273 aa)). The G1 motif stretch occupies residues 43–50 (GESGLGKS). GTP contacts are provided by residues 43-50 (GESGLGKS), Thr77, Gly103, 182-190 (KADTLTLRE), Gly240, and Arg255. Positions 100-103 (DTPG) are G3 motif. A G4 motif region spans residues 181–184 (AKAD). Positions 259–269 (WGVVEVENPEH) are important for dimerization.

Belongs to the TRAFAC class TrmE-Era-EngA-EngB-Septin-like GTPase superfamily. Septin GTPase family. In terms of assembly, septins polymerize into heterooligomeric protein complexes that form filaments, and associate with cellular membranes, actin filaments and microtubules. GTPase activity is required for filament formation. Can form heterooligomers with other family members and form filaments. Interacts with wdpcp.

Its subcellular location is the cytoplasm. The protein localises to the cytoskeleton. The protein resides in the spindle. It localises to the cleavage furrow. It is found in the midbody. Its subcellular location is the cell cortex. The protein localises to the cell projection. The protein resides in the cilium membrane. Filament-forming cytoskeletal GTPase. Required for normal organization of the actin cytoskeleton. Plays a role in the biogenesis of polarized columnar-shaped epithelium. Required for the progression through mitosis through regulation of chromosome congression. During anaphase, may be required for chromosome segregation and spindle elongation. Plays a role in ciliogenesis and collective cell movements including convergent extension during gastrulation. In cilia, required for the integrity of the diffusion barrier at the base of the primary cilium that prevents diffusion of transmembrane proteins between the cilia and plasma membranes. Controls cell shape and not polarization of cells during convergent extension. This Xenopus tropicalis (Western clawed frog) protein is Septin-2B (sept2-B).